Consider the following 269-residue polypeptide: MFSKKITALALVSAVKAHGTVSGIVADGIYYDGYNPSYQYTSPAPVTVGWLIPKDLDNGFISPAAYTTSDIICHVDAAPAQIEAPVKAGGKVELQWTPWPVSHKGPVIDYLANCNGPCETVDKTKLQWFKIDQVGLISPTAETSGLWGTDVLIANNNSWTVTIPSDIATGNYVLRHEIIALHSASSVNGAQNYPQCVNLAIKGTGTAKPAGVSATSFYTPTDPGIQFSLYGTLTSYTIPGPALYSGAISVTQTLPAAPTASATGVYTVS.

The first 17 residues, 1–17, serve as a signal peptide directing secretion; sequence MFSKKITALALVSAVKA. Histidine 18 and histidine 103 together coordinate Cu(2+). A disulfide bridge connects residues cysteine 73 and cysteine 196. N-linked (GlcNAc...) asparagine glycosylation occurs at asparagine 156. 2 residues coordinate O2: histidine 182 and glutamine 191. Tyrosine 193 is a Cu(2+) binding site.

The protein belongs to the polysaccharide monooxygenase AA9 family. Cu(2+) serves as cofactor.

The protein resides in the secreted. The catalysed reaction is [(1-&gt;4)-beta-D-glucosyl]n+m + reduced acceptor + O2 = 4-dehydro-beta-D-glucosyl-[(1-&gt;4)-beta-D-glucosyl]n-1 + [(1-&gt;4)-beta-D-glucosyl]m + acceptor + H2O.. Lytic polysaccharide monooxygenase (LPMO) that depolymerizes crystalline and amorphous polysaccharides via the oxidation of scissile alpha- or beta-(1-4)-glycosidic bonds, yielding C1 and C4 oxidation products. Catalysis by LPMOs requires the reduction of the active-site copper from Cu(II) to Cu(I) by a reducing agent and H(2)O(2) or O(2) as a cosubstrate. The sequence is that of AA9 family lytic polysaccharide monooxygenase I from Botryotinia fuckeliana (strain B05.10) (Noble rot fungus).